A 398-amino-acid polypeptide reads, in one-letter code: O-methyltransferase mpaG (398 aa).

D264 is an S-adenosyl-L-methionine binding site. H306 acts as the Proton acceptor in catalysis. Residues E335 and E362 contribute to the active site.

This sequence belongs to the class I-like SAM-binding methyltransferase superfamily. Cation-independent O-methyltransferase family. COMT subfamily.

The protein resides in the cytoplasm. It localises to the cytosol. The catalysed reaction is (4E,8E)-10-(4,6-dihydroxy-7-methyl-3-oxo-1,3-dihydro-2-benzofuran-5-yl)-4,8-dimethyldeca-4,8-dienoate + S-adenosyl-L-methionine = (4E,8E)-10-(4-hydroxy-6-methoxy-7-methyl-3-oxo-1,3-dihydro-2-benzofuran-5-yl)-4,8-dimethyldeca-4,8-dienoate + S-adenosyl-L-homocysteine + H(+). The protein operates within secondary metabolite biosynthesis; terpenoid biosynthesis. Its function is as follows. O-methyltransferase; part of the gene cluster that mediates the biosynthesis of mycophenolic acid (MPA), the first isolated antibiotic natural product in the world obtained from a culture of Penicillium brevicompactum in 1893. MpaC methylates farnesyl-DHMP-3C (FDHMP-3C) to yield MFDHMP-3C. The first step of the pathway is the synthesis of 5-methylorsellinic acid (5MOA) by the cytosolic polyketide synthase mpaC. 5MOA is then converted to the phthalide compound 5,7-dihydroxy-4,6-dimethylphthalide (DHMP) by the endoplasmic reticulum-bound cytochrome P450 monooxygenase mpaDE. MpaDE first catalyzes hydroxylation of 5-MOA to 4,6-dihydroxy-2-(hydroxymethyl)-3-methylbenzoic acid (DHMB). MpaDE then acts as a lactone synthase that catalyzes the ring closure to convert DHMB into DHMP. The next step is the prenylation of DHMP by the Golgi apparatus-associated prenyltransferase mpaA to yield farnesyl-DHMP (FDHMP). The ER-bound oxygenase mpaB then mediates the oxidative cleavage the C19-C20 double bond in FDHMP to yield FDHMP-3C via a mycophenolic aldehyde intermediate. The O-methyltransferase mpaG catalyzes the methylation of FDHMP-3C to yield MFDHMP-3C. After the cytosolic methylation of FDHMP-3C, MFDHMP-3C enters into peroxisomes probably via free diffusion due to its low molecular weight. Upon a peroxisomal CoA ligation reaction, catalyzed by a beta-oxidation component enzyme acyl-CoA ligase ACL891, MFDHMP-3C-CoA would then be restricted to peroxisomes for the following beta-oxidation pathway steps. The peroxisomal beta-oxidation machinery than converts MFDHMP-3C-CoA into MPA_CoA, via a beta-oxidation chain-shortening process. Finally mpaH acts as a peroxisomal acyl-CoA hydrolase with high substrate specificity toward MPA-CoA to release the final product MPA. This Penicillium roqueforti (strain FM164) protein is O-methyltransferase mpaG.